A 248-amino-acid chain; its full sequence is MYKLVLIRHGESTWNKENRFTGWVDVDLTEQGRNEAYQAGALLKEAGYTFDIAYTSVLKRAIRTLWHVQDKMDLMYLPVVHSWRLNERHYGALSGLNKAETAAKFGDDQVLVWRRSYDTPPPALEPTDERAPFSDPRYAKVPREQLPLTECLKDTVARVLPLWNESIAPAVRAGKQVLIAAHGNSLRALIKYLDGISDSDIVGLNIPNGVPLVYELDENLKPIQHYYLGDQDAIAKAQAAVAKQGKAG.

Residues 8–15, 21–22, Arg-60, 87–90, Lys-98, 114–115, and 183–184 contribute to the substrate site; these read RHGESTWN, TG, ERHY, RR, and GN. The Tele-phosphohistidine intermediate role is filled by His-9. Glu-87 (proton donor/acceptor) is an active-site residue.

Belongs to the phosphoglycerate mutase family. BPG-dependent PGAM subfamily. Homodimer.

The catalysed reaction is (2R)-2-phosphoglycerate = (2R)-3-phosphoglycerate. The protein operates within carbohydrate degradation; glycolysis; pyruvate from D-glyceraldehyde 3-phosphate: step 3/5. Catalyzes the interconversion of 2-phosphoglycerate and 3-phosphoglycerate. The sequence is that of 2,3-bisphosphoglycerate-dependent phosphoglycerate mutase from Burkholderia vietnamiensis (strain G4 / LMG 22486) (Burkholderia cepacia (strain R1808)).